Here is a 258-residue protein sequence, read N- to C-terminus: Acetylglutamate kinase (258 aa).

Residues 44-45 (GG), Arg-66, and Asn-158 each bind substrate. ATP is bound by residues 181–186 (DVSGIL) and 209–211 (IIT).

Belongs to the acetylglutamate kinase family. ArgB subfamily. As to quaternary structure, homodimer.

It localises to the cytoplasm. It catalyses the reaction N-acetyl-L-glutamate + ATP = N-acetyl-L-glutamyl 5-phosphate + ADP. The protein operates within amino-acid biosynthesis; L-arginine biosynthesis; N(2)-acetyl-L-ornithine from L-glutamate: step 2/4. In terms of biological role, catalyzes the ATP-dependent phosphorylation of N-acetyl-L-glutamate. The chain is Acetylglutamate kinase from Escherichia coli O157:H7.